The following is a 560-amino-acid chain: MPKFDVAKHDLERLVGKEFTVDEWEDLFLYAKCELDDIWEHEGKIYFKADAKDTNRPDLWSAEGIARQVRWALGMLRGLPRYSIEESNVMVYVDENLKDIRPYGVYAIVEDLELDEEALKQIIQLQEKVALTLGRKRKEVAIGTFDFDKLSPPFYYKAVEPQKIKFIPLNCEREMSADEILEEHEKGKEYGHLIKGRPYYPLLVDSEGNVLSMPPVINSETHGKVTEETKSIFIDITGWNLETIMLALNVIVTALAERGGKIRTVRVIYKDFELKTPDLTPKEFEVDLNYIKRLAGVELTDKDIKDLLERMMYEVDFVDRRVKLRYPAFRNDIMHPRDVLEDVLIAYGYNNIEPEEPELAVQGKGDDFVDFENAIRDLMVGFGLQEVMTFNLTNREAQFDKMNIPEEDIVEIENPISQKWSALRRWLLPSLMEFLSQNTHEEYPQRIFEVGKATLIDESRETKTISESKLVVAIAHPKVTFTEAKEILDSVLRHLGAEYTIREIEYGSFIPGRAGEIIVEGKKVGIIGEIHPQVLENWGVEMPVAAFEIFLRPFYKGSFL.

Residues 279–354 (LTPKEFEVDL…IAYGYNNIEP (76 aa)) enclose the B5 domain. Mg(2+) contacts are provided by Asp-332, Asp-338, Glu-341, and Asp-342.

The protein belongs to the phenylalanyl-tRNA synthetase beta subunit family. Type 2 subfamily. As to quaternary structure, tetramer of two alpha and two beta subunits. Mg(2+) is required as a cofactor.

The protein resides in the cytoplasm. It catalyses the reaction tRNA(Phe) + L-phenylalanine + ATP = L-phenylalanyl-tRNA(Phe) + AMP + diphosphate + H(+). This chain is Phenylalanine--tRNA ligase beta subunit, found in Thermococcus sibiricus (strain DSM 12597 / MM 739).